We begin with the raw amino-acid sequence, 281 residues long: Bis(5'-nucleosyl)-tetraphosphatase, symmetrical (281 aa).

It belongs to the Ap4A hydrolase family.

It catalyses the reaction P(1),P(4)-bis(5'-adenosyl) tetraphosphate + H2O = 2 ADP + 2 H(+). Hydrolyzes diadenosine 5',5'''-P1,P4-tetraphosphate to yield ADP. This chain is Bis(5'-nucleosyl)-tetraphosphatase, symmetrical, found in Acidovorax sp. (strain JS42).